A 321-amino-acid polypeptide reads, in one-letter code: Probable pectate lyase A (321 aa).

The signal sequence occupies residues M1–A18. A glycan (N-linked (GlcNAc...) asparagine) is linked at N93. Ca(2+) contacts are provided by D134, D163, and D167. R220 is an active-site residue. N-linked (GlcNAc...) asparagine glycosylation occurs at N238.

It belongs to the polysaccharide lyase 1 family. Requires Ca(2+) as cofactor.

The protein resides in the secreted. It catalyses the reaction Eliminative cleavage of (1-&gt;4)-alpha-D-galacturonan to give oligosaccharides with 4-deoxy-alpha-D-galact-4-enuronosyl groups at their non-reducing ends.. Its function is as follows. Pectinolytic enzyme consist of four classes of enzymes: pectin lyase, polygalacturonase, pectin methylesterase and rhamnogalacturonase. Among pectinolytic enzymes, pectin lyase is the most important in depolymerization of pectin, since it cleaves internal glycosidic bonds of highly methylated pectins. Favors pectate, the anion, over pectin, the methyl ester. The polypeptide is Probable pectate lyase A (plyA) (Aspergillus fumigatus (strain CBS 144.89 / FGSC A1163 / CEA10) (Neosartorya fumigata)).